A 208-amino-acid polypeptide reads, in one-letter code: MNVTIVDYNSGNISSVINSFKEVAKDKVNIEVTSDLNKIRSSDKVVLPGQGSFKSCVDALNAINGLVETLNEFTVTNKKPLLGICVGLQMFADLGYEETETKGLGWISGKVSKIDNQNNKFKLPHIGWNEINIVKESKIFEGIKNKSHMYFVHSYEFIPDDKSVISATTDYSSNIVCSVEKENIFGTQFHPEKSDKLGLKIIENFLNL.

The 207-residue stretch at 2 to 208 (NVTIVDYNSG…LKIIENFLNL (207 aa)) folds into the Glutamine amidotransferase type-1 domain. Catalysis depends on C85, which acts as the Nucleophile. Active-site residues include H190 and E192.

Heterodimer of HisH and HisF.

The protein localises to the cytoplasm. It carries out the reaction 5-[(5-phospho-1-deoxy-D-ribulos-1-ylimino)methylamino]-1-(5-phospho-beta-D-ribosyl)imidazole-4-carboxamide + L-glutamine = D-erythro-1-(imidazol-4-yl)glycerol 3-phosphate + 5-amino-1-(5-phospho-beta-D-ribosyl)imidazole-4-carboxamide + L-glutamate + H(+). The catalysed reaction is L-glutamine + H2O = L-glutamate + NH4(+). It functions in the pathway amino-acid biosynthesis; L-histidine biosynthesis; L-histidine from 5-phospho-alpha-D-ribose 1-diphosphate: step 5/9. Its function is as follows. IGPS catalyzes the conversion of PRFAR and glutamine to IGP, AICAR and glutamate. The HisH subunit catalyzes the hydrolysis of glutamine to glutamate and ammonia as part of the synthesis of IGP and AICAR. The resulting ammonia molecule is channeled to the active site of HisF. The polypeptide is Imidazole glycerol phosphate synthase subunit HisH (Pelagibacter ubique (strain HTCC1062)).